We begin with the raw amino-acid sequence, 636 residues long: Chaperone protein DnaK2 (636 aa).

Thr198 bears the Phosphothreonine; by autocatalysis mark. Positions 604 to 618 (EAGVGAPGAGPEAGT) are enriched in low complexity. The disordered stretch occupies residues 604–636 (EAGVGAPGAGPEAGTSSGGGDDVIDAEFSEPEK). A compositionally biased stretch (acidic residues) spans 625-636 (DVIDAEFSEPEK).

Belongs to the heat shock protein 70 family.

In terms of biological role, acts as a chaperone. The sequence is that of Chaperone protein DnaK2 (dnaK2) from Synechocystis sp. (strain ATCC 27184 / PCC 6803 / Kazusa).